We begin with the raw amino-acid sequence, 296 residues long: Cholesterol ring-cleaving hydrolase IpdA subunit (296 aa).

This sequence belongs to the 3-oxoacid CoA-transferase subunit A family. Heterotetramer composed of 2 IpdA subunits and 2 IpdB subunits.

The catalysed reaction is (3E)-2-(2-carboxylatoethyl)-3-methyl-6-oxocyclohex-1-ene-1-carboxyl-CoA + H2O = 6-methyl-3,7-dioxodecanedioyl-CoA. It participates in steroid metabolism; cholesterol degradation. Functionally, involved in the final steps of cholesterol and steroid degradation. Opens the last steroid ring of cholesterol by catalyzing the hydrolysis of (3E)-2-(2-carboxylatoethyl)-3-methyl-6-oxocyclohex-1-ene-1-carboxyl-CoA (COCHEA-CoA) to 6-methyl-3,7-dioxodecanedioyl-CoA (MeDODA-CoA). In Rhodococcus jostii (strain RHA1), this protein is Cholesterol ring-cleaving hydrolase IpdA subunit.